The chain runs to 260 residues: MIVGVFANFQKELSKEILDKIVSVLKNEKIDWVLMNEKNKDSVKVNFLITIGGDGTLLNVVEKVAKENLPVLGINCGRVGYLTEEVADNIHFAIKKIIDNDYFIEERHLVEAHFKDKIFYALNDICLARSTFNIIDLSLYIDEVFAQEYRSDGIIIATATGSTAYSLSAGGPIVEPQLGVMVVTPICPHSLSSRSLVLGDDRVVKIKSESDEVLVVSDGRVADTLKKGEYLECKISSKKLKLVRLKKKNFYEVLREKIKE.

Asp54 (proton acceptor) is an active-site residue. NAD(+)-binding positions include 54–55 (DG), 123–124 (ND), Arg150, Asp152, and 163–168 (TAYSLS).

Belongs to the NAD kinase family. A divalent metal cation serves as cofactor.

It is found in the cytoplasm. It catalyses the reaction NAD(+) + ATP = ADP + NADP(+) + H(+). Functionally, involved in the regulation of the intracellular balance of NAD and NADP, and is a key enzyme in the biosynthesis of NADP. Catalyzes specifically the phosphorylation on 2'-hydroxyl of the adenosine moiety of NAD to yield NADP. The polypeptide is NAD kinase (Caldicellulosiruptor saccharolyticus (strain ATCC 43494 / DSM 8903 / Tp8T 6331)).